A 235-amino-acid polypeptide reads, in one-letter code: Aspartate/glutamate leucyltransferase (235 aa).

This sequence belongs to the R-transferase family. Bpt subfamily.

The protein localises to the cytoplasm. It carries out the reaction N-terminal L-glutamyl-[protein] + L-leucyl-tRNA(Leu) = N-terminal L-leucyl-L-glutamyl-[protein] + tRNA(Leu) + H(+). The enzyme catalyses N-terminal L-aspartyl-[protein] + L-leucyl-tRNA(Leu) = N-terminal L-leucyl-L-aspartyl-[protein] + tRNA(Leu) + H(+). Its function is as follows. Functions in the N-end rule pathway of protein degradation where it conjugates Leu from its aminoacyl-tRNA to the N-termini of proteins containing an N-terminal aspartate or glutamate. This Stutzerimonas stutzeri (strain A1501) (Pseudomonas stutzeri) protein is Aspartate/glutamate leucyltransferase.